The sequence spans 128 residues: Large ribosomal subunit protein bL17 (128 aa).

It belongs to the bacterial ribosomal protein bL17 family. As to quaternary structure, part of the 50S ribosomal subunit. Contacts protein L32.

The polypeptide is Large ribosomal subunit protein bL17 (Hydrogenovibrio crunogenus (strain DSM 25203 / XCL-2) (Thiomicrospira crunogena)).